The primary structure comprises 209 residues: tRNA (guanine-N(7)-)-methyltransferase (209 aa).

D35, E60, N87, and D113 together coordinate S-adenosyl-L-methionine. D113 is a catalytic residue. 2 residues coordinate substrate: K117 and D149.

This sequence belongs to the class I-like SAM-binding methyltransferase superfamily. TrmB family.

It catalyses the reaction guanosine(46) in tRNA + S-adenosyl-L-methionine = N(7)-methylguanosine(46) in tRNA + S-adenosyl-L-homocysteine. It participates in tRNA modification; N(7)-methylguanine-tRNA biosynthesis. In terms of biological role, catalyzes the formation of N(7)-methylguanine at position 46 (m7G46) in tRNA. This is tRNA (guanine-N(7)-)-methyltransferase from Prochlorococcus marinus (strain AS9601).